The sequence spans 164 residues: 3-dehydroquinate dehydratase (164 aa).

Y22 (proton acceptor) is an active-site residue. Substrate contacts are provided by N73, H79, and D86. The active-site Proton donor is H99. Substrate-binding positions include 100-101 (IS) and R110.

The protein belongs to the type-II 3-dehydroquinase family. Homododecamer.

The catalysed reaction is 3-dehydroquinate = 3-dehydroshikimate + H2O. The protein operates within metabolic intermediate biosynthesis; chorismate biosynthesis; chorismate from D-erythrose 4-phosphate and phosphoenolpyruvate: step 3/7. Catalyzes a trans-dehydration via an enolate intermediate. The polypeptide is 3-dehydroquinate dehydratase (Aliarcobacter butzleri (strain RM4018) (Arcobacter butzleri)).